A 342-amino-acid chain; its full sequence is tRNA dimethylallyltransferase (342 aa).

39–46 (GPTGSGKT) lines the ATP pocket. Residue 41–46 (TGSGKT) participates in substrate binding. Residues 64–67 (DSMQ) are interaction with substrate tRNA.

Belongs to the IPP transferase family. In terms of assembly, monomer. Requires Mg(2+) as cofactor.

It catalyses the reaction adenosine(37) in tRNA + dimethylallyl diphosphate = N(6)-dimethylallyladenosine(37) in tRNA + diphosphate. Catalyzes the transfer of a dimethylallyl group onto the adenine at position 37 in tRNAs that read codons beginning with uridine, leading to the formation of N6-(dimethylallyl)adenosine (i(6)A). This chain is tRNA dimethylallyltransferase, found in Chlamydia abortus (strain DSM 27085 / S26/3) (Chlamydophila abortus).